The primary structure comprises 120 residues: uncharacterized protein (120 aa).

Residues 4-120 (QIGTVAVYVE…EDGNVFLLKE (117 aa)) form the VOC domain.

This is an uncharacterized protein from Bacillus subtilis (strain 168).